The following is a 703-amino-acid chain: Heat shock protein 75 kDa, mitochondrial (703 aa).

The N-terminal 56 residues, 1–56, are a transit peptide targeting the mitochondrion; sequence MARELRMLLLWGRRLRAPALAAACGGKPVLCPWRPPAQSWGPPRSLASSFHVGRPF. Positions 118 and 157 each coordinate ATP. Position 169 is a phosphoserine (serine 169). Asparagine 170 provides a ligand contact to ATP. The residue at position 173 (threonine 173) is a Phosphothreonine. Residues phenylalanine 204 and arginine 401 each coordinate ATP. N6-acetyllysine is present on residues lysine 423, lysine 430, and lysine 465. At threonine 493 the chain carries Phosphothreonine.

It belongs to the heat shock protein 90 family. As to quaternary structure, binds to the intracellular domain of tumor necrosis factor type 1 receptor. Binds to RB1. Interacts with SRC. Interacts with SDHA.

Its subcellular location is the mitochondrion. It localises to the mitochondrion inner membrane. The protein localises to the mitochondrion matrix. Chaperone that expresses an ATPase activity. Involved in maintaining mitochondrial function and polarization, downstream of PINK1 and mitochondrial complex I. Is a negative regulator of mitochondrial respiration able to modulate the balance between oxidative phosphorylation and aerobic glycolysis. The impact of TRAP1 on mitochondrial respiration is probably mediated by modulation of mitochondrial SRC and inhibition of SDHA. In Bos taurus (Bovine), this protein is Heat shock protein 75 kDa, mitochondrial (TRAP1).